The sequence spans 89 residues: MVDKTQGIIDPPIDELLSKVDSKYALVIFASKRARQINDYYADLHEGSLFDNVGPLVDSTIDDKPLSVAMHEINEDKLVATPIVEPAAS.

It belongs to the RNA polymerase subunit omega family. In terms of assembly, the RNAP catalytic core consists of 2 alpha, 1 beta, 1 beta' and 1 omega subunit. When a sigma factor is associated with the core the holoenzyme is formed, which can initiate transcription.

The catalysed reaction is RNA(n) + a ribonucleoside 5'-triphosphate = RNA(n+1) + diphosphate. Functionally, promotes RNA polymerase assembly. Latches the N- and C-terminal regions of the beta' subunit thereby facilitating its interaction with the beta and alpha subunits. The sequence is that of DNA-directed RNA polymerase subunit omega from Clavibacter michiganensis subsp. michiganensis (strain NCPPB 382).